Reading from the N-terminus, the 383-residue chain is MRLSVFWFLPTHGDGKYLGTNEGARPVDHAYLQQIAQAADRLGFGGVLIPTGRSCEDAWLVAASLIPVTQRLRFLVALRPGVISPTQAARQAATLDRLSNGRALFNLVTGGDAEELAGDGVFLDHGERYAESAEFTRVWRRVLEGETVDYKGKHVHVRGARLMFKPVQQPRPPLWFGGSSEVAQDLAAEQVDVYLTWGEPPAQVKEKIARVQAKAAARGRKVRFGIRLHVIVRETNDEAWQAADRLISHLDDQTIAKAQAALARTDSVGQQRMAALHGGKRDRLEISPNLWAGVGLVRGGAGTALVGDGPTVAARMQEYADLGIETFILSGYPHLEEAYRVGELLFPHLELNIPEVPKPAAVQAHGEHVAHDFAPQKVPQGER.

The protein belongs to the SsuD family. Homotetramer.

It catalyses the reaction an alkanesulfonate + FMNH2 + O2 = an aldehyde + FMN + sulfite + H2O + 2 H(+). Catalyzes the desulfonation of aliphatic sulfonates. The protein is Alkanesulfonate monooxygenase of Erwinia pyrifoliae (strain DSM 12163 / CIP 106111 / Ep16/96).